The primary structure comprises 211 residues: Probable nicotinate-nucleotide adenylyltransferase (211 aa).

This sequence belongs to the NadD family.

It carries out the reaction nicotinate beta-D-ribonucleotide + ATP + H(+) = deamido-NAD(+) + diphosphate. It functions in the pathway cofactor biosynthesis; NAD(+) biosynthesis; deamido-NAD(+) from nicotinate D-ribonucleotide: step 1/1. In terms of biological role, catalyzes the reversible adenylation of nicotinate mononucleotide (NaMN) to nicotinic acid adenine dinucleotide (NaAD). This chain is Probable nicotinate-nucleotide adenylyltransferase, found in Shewanella sediminis (strain HAW-EB3).